The sequence spans 296 residues: Iron(3+)-hydroxamate-binding protein FhuD (296 aa).

Residues 1–30 (MSGLPLISRRRLLTAMALSPLLWQMNTAHA) constitute a signal peptide (tat-type signal). The region spanning 37–296 (RIVALEWLPV…VLDNAIGGKA (260 aa)) is the Fe/B12 periplasmic-binding domain. 9 residues coordinate Fe(III)-coprogen: tryptophan 68, arginine 84, serine 103, tyrosine 106, phenylalanine 124, tryptophan 217, tryptophan 273, phenylalanine 274, and tyrosine 275.

The protein belongs to the bacterial solute-binding protein 8 family. In terms of assembly, the complex is composed of two ATP-binding proteins (FhuC), a transmembrane protein (FhuB) and a solute-binding protein (FhuD). FhuD interacts with FhuB. Substrate-loaded FhuD binds FhuB more strongly than FhuD alone. Post-translationally, exported by the Tat system. The position of the signal peptide cleavage has been experimentally proven. Can also be exported by the Sec system.

It is found in the periplasm. In terms of biological role, part of the ABC transporter complex FhuCDB involved in iron(3+)-hydroxamate import. Binds the iron(3+)-hydroxamate complex and transfers it to the membrane-bound permease. Required for the transport of all iron(3+)-hydroxamate siderophores such as ferrichrome, gallichrome, desferrioxamine, coprogen, aerobactin, shizokinen, rhodotorulic acid and the antibiotic albomycin. The chain is Iron(3+)-hydroxamate-binding protein FhuD (fhuD) from Escherichia coli (strain K12).